Consider the following 175-residue polypeptide: MSLSRRDPLVVGSVVGDVLDPFTRLVSLKVTYGHREVTNGLDLRPSQVLNKPIVEIGGDDFRNFYTLVMVDPDVPSPSNPHQREYLHWLVTDIPATTGNAFGNEVVCYESPRPPSGIHRIVLVLFRQLGRQTVYAPGWRQQFNTREFAEIYNLGLPVAASYFNCQRENGCGGRRT.

It belongs to the phosphatidylethanolamine-binding protein family.

It is found in the cytoplasm. May form complexes with phosphorylated ligands by interfering with kinases and their effectors. The protein is Protein TWIN SISTER of FT (TSF) of Arabidopsis thaliana (Mouse-ear cress).